Consider the following 795-residue polypeptide: RalBP1-associated Eps domain-containing protein 1 (795 aa).

The EH 1 domain occupies 10 to 113 (EQKYYSDLFS…SKNEQESRLA (104 aa)). Residues 112 to 238 (LAASYSSDSE…NWVSFADTPP (127 aa)) form a disordered region. Positions 115-126 (SYSSDSENQGSY) are enriched in polar residues. A phosphoserine mark is found at Ser-145, Ser-162, Ser-166, and Ser-170. The segment covering 156 to 168 (EQQEPVSPVVSPQ) has biased composition (low complexity). Phosphothreonine is present on Thr-173. Residues 205–216 (GDAQAGSSAGDA) show a composition bias toward low complexity. Phosphoserine is present on residues Ser-272 and Ser-273. The EH 2 domain occupies 285-374 (QRQYYVNQFK…ESLMPKLIDL (90 aa)). Residue Tyr-288 is modified to Phosphotyrosine. A Phosphoserine modification is found at Ser-307. The EF-hand domain maps to 318–353 (LPILELSHIWELSDFDKDGALTLDEFCAAFHLVVAR). Ca(2+)-binding residues include Asp-331, Asp-333, Asp-335, and Glu-342. Disordered regions lie at residues 380–433 (VGEQ…SSQT) and 469–720 (ELKR…DEHT). A compositionally biased stretch (polar residues) spans 407–433 (LNQTWPELNQSSEQWETFSERSSSSQT). Ser-475, Ser-482, and Ser-489 each carry phosphoserine. Polar residues-rich tracts occupy residues 497 to 518 (INSSVKFPSGNTVDGYSSSDSF) and 525 to 542 (IGSSVTRQRSHSGTSPDN). At Ser-539 the chain carries Phosphoserine. Thr-543 is modified (phosphothreonine). Pro residues predominate over residues 543 to 553 (TAPPPPPPRPQ). Ser-561 carries the post-translational modification Phosphoserine. The span at 562 to 573 (LDMNRTFAVTTG) shows a compositional bias: polar residues. Residues 574-583 (QQQAGVVAHP) show a composition bias toward low complexity. Positions 584-595 (PAVPPRPQPSQA) are enriched in pro residues. 2 stretches are compositionally biased toward polar residues: residues 611-622 (THTSTSPQQIPE) and 681-692 (ATNVPANVSKGT). The interval 651 to 795 (HPEVLPAEKA…LEQLRPFSHL (145 aa)) is interaction with RALBP1. The span at 707–720 (KSEDELRPDVDEHT) shows a compositional bias: basic and acidic residues. 2 positions are modified to phosphoserine: Ser-708 and Ser-739. Positions 750–790 (SIRRNKETNTVLARLNSELQQQLKDVLEERISLEVQLEQLR) form a coiled coil.

Homodimer (Potential). Interacts with RALBP1, CRK and GRB2. Binding to RALBP1 does not affect its Ral-binding activity. Forms a complex with the SH3 domains of CRK and GRB2 which may link it to an EGF-responsive tyrosine kinase. Interacts with RAB11FIP2. Interacts with AMPH, ITSN1 (via SH3 domains) and SGIP1; may be involved in clathrin-mediated endocytosis. EGF stimulates phosphorylation on Tyr-residues. As to expression, expressed in all tissues examined. The highest level expression was found in the kidney and testis.

The protein localises to the membrane. The protein resides in the clathrin-coated pit. In terms of biological role, may coordinate the cellular actions of activated EGF receptors and Ral-GTPases. The polypeptide is RalBP1-associated Eps domain-containing protein 1 (Reps1) (Mus musculus (Mouse)).